Consider the following 196-residue polypeptide: DFEYLQLVLTWPASFCYANHCERIAPNNFTIHGLWPDNVKTRLHNCKPKPTYSYFTGKMLNDLDKHWMQLKFEQDYGRTEQPSWKYQYIKHGSCCQKRYNQNTYFGLALRLKDKFDLLRTLQTHRIIPGSSYTFQDIFDAIKTVSQENPDIKCAEVTKGTPELYEIGICFTPNADSMFRCPQSDTCDKTAKVLFRR.

A disulfide bridge links Cys-16 with Cys-21. Asn-28 is a glycosylation site (N-linked (GlcNAc...) asparagine). The active-site Proton donor is His-32. Residues His-32 and 69-70 (QL) each bind RNA. 3 disulfide bridges follow: Cys-46-Cys-94, Cys-153-Cys-186, and Cys-169-Cys-180. Gln-87 is an active-site residue. Residue 90–91 (KH) participates in RNA binding. His-91 (proton acceptor) is an active-site residue.

Belongs to the RNase T2 family. In terms of assembly, monomer.

It is found in the secreted. The protein localises to the extracellular space. The enzyme catalyses a ribonucleotidyl-ribonucleotide-RNA + H2O = a 3'-end 3'-phospho-ribonucleotide-RNA + a 5'-end dephospho-ribonucleoside-RNA + H(+). Functionally, self-incompatibility (SI) is the inherited ability of a flowering plant to prevent self-fertilization by discriminating between self and non-self pollen during pollination. In many species of the Solanaceae, self-incompatibility is controlled by the single, multiallelic locus S. The protein is Ribonuclease S-F11 of Nicotiana alata (Winged tobacco).